Reading from the N-terminus, the 285-residue chain is MKIAIPNKGRLQGPALQFLNSVGIKPMANDDRALMVPTSWEGVQLVTIRTEDIPNIVETGAVDLGITGLDYVMESGADVEELVKLDFGKSRLVLAVPMSWNIEDPRDMPKNVRIATKYHNIARAYLERKGIEARLVKISGAAEIMPSLGAADAIIDVTSTGTTLKLHGLKPIDVVSESYAMVIGNKNWMKSEEADRINLVLTMMKGALSARGKKMIFMNVDDVNLEAVVSSLPAMLAPAVSKLSNSNAWEVVTVTDEEMLPEVIAKAKTAGARDIVVVNIEKVIK.

The protein belongs to the ATP phosphoribosyltransferase family. Long subfamily. Mg(2+) serves as cofactor.

It localises to the cytoplasm. It catalyses the reaction 1-(5-phospho-beta-D-ribosyl)-ATP + diphosphate = 5-phospho-alpha-D-ribose 1-diphosphate + ATP. It functions in the pathway amino-acid biosynthesis; L-histidine biosynthesis; L-histidine from 5-phospho-alpha-D-ribose 1-diphosphate: step 1/9. With respect to regulation, feedback inhibited by histidine. Its function is as follows. Catalyzes the condensation of ATP and 5-phosphoribose 1-diphosphate to form N'-(5'-phosphoribosyl)-ATP (PR-ATP). Has a crucial role in the pathway because the rate of histidine biosynthesis seems to be controlled primarily by regulation of HisG enzymatic activity. This Metallosphaera sedula (strain ATCC 51363 / DSM 5348 / JCM 9185 / NBRC 15509 / TH2) protein is ATP phosphoribosyltransferase.